The primary structure comprises 267 residues: MTKNKIGVFGANGRMGSALLEAASTKEHSELAAAYVRSSSPLLGINVNQLNSAADKTVTFSDEANITNVDVLIDFTLPAGMRTHLQTAVKQGVPMVIGTTGLNEADMTLLHEAANHIPIVFARNYSVGVNVLLNLVQTAATKFGDDMDIEIFEAHHRHKIDAPSGTALAIGEAIADAKGWDHDKVAVYDRSKVEQAKSQNEIGYSVLRGGDIVGEHTAYFATMGERLELTHKASSRMTFALGAIRAAGWLINKPAGLYDMQDVLDLK.

Residue 10-15 coordinates NAD(+); that stretch reads GANGRM. Arginine 37 serves as a coordination point for NADP(+). NAD(+) is bound by residues 98 to 100 and 122 to 125; these read GTT and ARNY. The Proton donor/acceptor role is filled by histidine 155. Histidine 156 serves as a coordination point for (S)-2,3,4,5-tetrahydrodipicolinate. Catalysis depends on lysine 159, which acts as the Proton donor. Residue 165–166 coordinates (S)-2,3,4,5-tetrahydrodipicolinate; the sequence is GT.

This sequence belongs to the DapB family.

It localises to the cytoplasm. The enzyme catalyses (S)-2,3,4,5-tetrahydrodipicolinate + NAD(+) + H2O = (2S,4S)-4-hydroxy-2,3,4,5-tetrahydrodipicolinate + NADH + H(+). The catalysed reaction is (S)-2,3,4,5-tetrahydrodipicolinate + NADP(+) + H2O = (2S,4S)-4-hydroxy-2,3,4,5-tetrahydrodipicolinate + NADPH + H(+). It functions in the pathway amino-acid biosynthesis; L-lysine biosynthesis via DAP pathway; (S)-tetrahydrodipicolinate from L-aspartate: step 4/4. In terms of biological role, catalyzes the conversion of 4-hydroxy-tetrahydrodipicolinate (HTPA) to tetrahydrodipicolinate. The protein is 4-hydroxy-tetrahydrodipicolinate reductase of Pseudoalteromonas translucida (strain TAC 125).